We begin with the raw amino-acid sequence, 451 residues long: Tubulin alpha chain (451 aa).

The short motif at 1–4 (MREC) is the MREC motif element. Q11 contributes to the GTP binding site. K40 is subject to N6-acetyllysine. 7 residues coordinate GTP: E71, S140, G144, T145, T179, N206, and N228. Mg(2+) is bound at residue E71. The active site involves E254. The tract at residues 432–451 (YEEVGVDSVEGEGEEEGEEY) is disordered. E445 is subject to 5-glutamyl polyglutamate.

It belongs to the tubulin family. As to quaternary structure, dimer of alpha and beta chains. A typical microtubule is a hollow water-filled tube with an outer diameter of 25 nm and an inner diameter of 15 nM. Alpha-beta heterodimers associate head-to-tail to form protofilaments running lengthwise along the microtubule wall with the beta-tubulin subunit facing the microtubule plus end conferring a structural polarity. Microtubules usually have 13 protofilaments but different protofilament numbers can be found in some organisms and specialized cells. Requires Mg(2+) as cofactor. Post-translationally, some glutamate residues at the C-terminus are polyglycylated, resulting in polyglycine chains on the gamma-carboxyl group. Glycylation is mainly limited to tubulin incorporated into axonemes (cilia and flagella) whereas glutamylation is prevalent in neuronal cells, centrioles, axonemes, and the mitotic spindle. Both modifications can coexist on the same protein on adjacent residues, and lowering polyglycylation levels increases polyglutamylation, and reciprocally. The precise function of polyglycylation is still unclear. In terms of processing, some glutamate residues at the C-terminus are polyglutamylated, resulting in polyglutamate chains on the gamma-carboxyl group. Polyglutamylation plays a key role in microtubule severing by spastin (SPAST). SPAST preferentially recognizes and acts on microtubules decorated with short polyglutamate tails: severing activity by SPAST increases as the number of glutamates per tubulin rises from one to eight, but decreases beyond this glutamylation threshold. Acetylation of alpha chains at Lys-40 is located inside the microtubule lumen. This modification has been correlated with increased microtubule stability, intracellular transport and ciliary assembly. Post-translationally, undergoes a tyrosination/detyrosination cycle, the cyclic removal and re-addition of a C-terminal tyrosine residue by the enzymes tubulin tyrosine carboxypeptidase (MATCAP, VASH1 or VASH2) and tubulin tyrosine ligase (TTL), respectively. In terms of processing, tyrosination promotes microtubule interaction with CAP-Gly microtubule plus-end tracking proteins. Tyrosinated tubulins regulate the initiation of dynein-driven motility. Detyrosination is involved in metaphase plate congression by guiding chromosomes during mitosis. Detyrosination increases microtubules-dependent mechanotransduction in dystrophic cardiac and skeletal muscle. In cardiomyocytes, detyrosinated microtubules are required to resist to contractile compression during contraction.

It is found in the cytoplasm. It localises to the cytoskeleton. It catalyses the reaction GTP + H2O = GDP + phosphate + H(+). Functionally, tubulin is the major constituent of microtubules, a cylinder consisting of laterally associated linear protofilaments composed of alpha- and beta-tubulin heterodimers. Microtubules grow by the addition of GTP-tubulin dimers to the microtubule end, where a stabilizing cap forms. Below the cap, tubulin dimers are in GDP-bound state, owing to GTPase activity of alpha-tubulin. The polypeptide is Tubulin alpha chain (Torpedo marmorata (Marbled electric ray)).